The primary structure comprises 614 residues: Vitamin B12 transporter BtuB (614 aa).

The signal sequence occupies residues 1 to 20; it reads MIKKASLLTACSVTAFSAWA. The TonB box signature appears at 26-33; sequence DTLVVTAI. The TBDR plug domain occupies 38 to 152; the sequence is PRSTVLAPTT…IGGVVNIITT (115 aa). Cyanocob(III)alamin contacts are provided by residues Leu-83, Ser-85, Asn-92, and 110 to 111; that span reads VS. In terms of domain architecture, TBDR beta-barrel spans 155–614; sequence EPGTEISAGW…EYTLSGSYTF (460 aa). The next 3 beta stranded transmembrane spans lie at 158 to 165, 169 to 178, and 184 to 195; these read TEISAGWG, YQNYDVSTQQ, and TRVTLLGDYAHT. Residues Asp-199, Gln-211, Asp-213, and Asp-215 each contribute to the Ca(2+) site. 2 consecutive transmembrane segments (beta stranded) span residues 217 to 227 and 232 to 248; these read FLSKTLYGALE and DAWS…NRTN. Ca(2+) contacts are provided by Tyr-249 and Asp-250. Ala-251 contacts cyanocob(III)alamin. Asp-261 is a binding site for Ca(2+). A run of 14 beta stranded transmembrane segments spans residues 263–277, 279–296, 309–325, 328–337, 353–369, 371–381, 385–400, 403–417, 434–443, 449–458, 473–490, 494–509, 517–529, and 535–550; these read RKLY…LRYN, ELIK…KDYN, TLDE…NNVI, HGSIGAGVDW, YDQR…QQVG, FTFEGAARSDD, FGRH…WEFI, YRFI…KAPN, KSKQWEGAFE, VNWRISGYRN, YYNE…TANF, PLTH…ARNA, RRAK…QLDW, and DWGI…YDKD. Thr-309 contacts cyanocob(III)alamin. Position 517 (Arg-517) interacts with cyanocob(III)alamin. Tyr-551 contacts cyanocob(III)alamin. 3 beta stranded membrane-spanning segments follow: residues 558-572, 585-596, and 602-614; these read TVKM…LAVA, IANLFDKDYETV, and AGRE…SYTF. Positions 597-614 match the TonB C-terminal box motif; sequence YGYQTAGREYTLSGSYTF.

It belongs to the TonB-dependent receptor family. BtuB (TC 1.B.14.3.1) subfamily.

The protein localises to the cell outer membrane. In terms of biological role, involved in the active translocation of vitamin B12 (cyanocobalamin) across the outer membrane to the periplasmic space. It derives its energy for transport by interacting with the trans-periplasmic membrane protein TonB. The polypeptide is Vitamin B12 transporter BtuB (Shigella flexneri serotype 5b (strain 8401)).